The chain runs to 445 residues: Eukaryotic translation initiation factor 3 subunit E (445 aa).

The 174-residue stretch at 230–403 (FFNHVKGRDL…GHVVMGAQPL (174 aa)) folds into the PCI domain.

The protein belongs to the eIF-3 subunit E family. Component of the eukaryotic translation initiation factor 3 (eIF-3) complex.

It is found in the cytoplasm. Functionally, component of the eukaryotic translation initiation factor 3 (eIF-3) complex, which is involved in protein synthesis of a specialized repertoire of mRNAs and, together with other initiation factors, stimulates binding of mRNA and methionyl-tRNAi to the 40S ribosome. The eIF-3 complex specifically targets and initiates translation of a subset of mRNAs involved in cell proliferation. The protein is Eukaryotic translation initiation factor 3 subunit E (eIF3-S6) of Bombyx mori (Silk moth).